Reading from the N-terminus, the 397-residue chain is Serpin B10 (397 aa).

The short motif at 74 to 77 (KKRK) is the Nuclear localization signal element.

It belongs to the serpin family. Ov-serpin subfamily.

The protein resides in the nucleus. The protein localises to the cytoplasm. Protease inhibitor that may play a role in the regulation of protease activities during hematopoiesis and apoptosis induced by TNF. May regulate protease activities in the cytoplasm and in the nucleus. In Otolemur garnettii (Small-eared galago), this protein is Serpin B10 (SERPINB10).